The sequence spans 59 residues: Large ribosomal subunit protein uL30 (59 aa).

This sequence belongs to the universal ribosomal protein uL30 family. As to quaternary structure, part of the 50S ribosomal subunit.

This is Large ribosomal subunit protein uL30 from Histophilus somni (strain 129Pt) (Haemophilus somnus).